The following is a 151-amino-acid chain: Trivalent organoarsenical cleaving enzyme (151 aa).

In terms of domain architecture, VOC spans 2–118; it reads SRVQLALRVP…GGEPWEVYVV (117 aa). Q5 is a Fe(2+) binding site. Position 61 (D61) interacts with roxarsone (III). H62 provides a ligand contact to Fe(2+). C95 and C96 together coordinate roxarsone (III). Residue E114 coordinates Fe(2+).

Monomer. It depends on Fe(2+) as a cofactor.

It catalyses the reaction methylarsonous acid + AH2 + O2 = arsenite + methanol + A + H(+). The catalysed reaction is roxarsone (III) + AH2 + O2 = 4-hydroxy-3-nitrocyclohexa-2,5-dien-1-one + arsenite + A + H(+). It carries out the reaction nitarsone (III) + AH2 + O2 = 4-nitrocyclohexa-2,5-dien-1-one + arsenite + A + H(+). The enzyme catalyses 4-aminophenylarsonous acid + AH2 + O2 = 4-aminocyclohexa-2,5-dien-1-one + arsenite + A. Functionally, nonheme iron-dependent dioxygenase that can break carbon-arsenic bonds, playing a role in the detoxification of environmental organoarsenical compounds. Catalyzes the oxygen-dependent demethylation of highly toxic methylarsonous acid (MAs(III)) to arsenite, which can then be exported out of the cell. Can also cleave the C-As bond in several trivalent aromatic arsenicals, including roxarsone (III), nitarsone (III) and (4-aminophenyl)arsonous acid. Organoarsenical degradation by this enzyme is proposed to have a significant impact on the arsenic biogeocycle that maintains a balance between organic and inorganic species. This is Trivalent organoarsenical cleaving enzyme from Thermomonospora curvata (strain ATCC 19995 / DSM 43183 / JCM 3096 / KCTC 9072 / NBRC 15933 / NCIMB 10081 / Henssen B9).